Here is a 1013-residue protein sequence, read N- to C-terminus: Poly [ADP-ribose] polymerase 1 (1013 aa).

Ala2 carries the post-translational modification N-acetylalanine. A PARP-type 1 zinc finger spans residues Tyr9 to Gly93. Residues Cys21 and Cys24 each contribute to the Zn(2+) site. Ser41 bears the Phosphoserine mark. Zn(2+) contacts are provided by His53 and Cys56. Residues Lys97 and Lys105 each carry the N6-acetyllysine modification. A PARP-type 2 zinc finger spans residues Phe113 to Lys203. Residues Cys125 and Cys128 each coordinate Zn(2+). Position 131 is an N6-acetyllysine (Lys131). The Zn(2+) site is built by His159 and Cys162. Phosphoserine occurs at positions 177, 179, and 185. Lys192 is covalently cross-linked (Glycyl lysine isopeptide (Lys-Gly) (interchain with G-Cter in SUMO2)). The tract at residues Pro200 to Lys226 is disordered. Lys203 participates in a covalent cross-link: Glycyl lysine isopeptide (Lys-Gly) (interchain with G-Cter in SUMO1); alternate. Lys203 is covalently cross-linked (Glycyl lysine isopeptide (Lys-Gly) (interchain with G-Cter in SUMO2); alternate). A compositionally biased stretch (basic and acidic residues) spans Asn204–Lys226. 2 short sequence motifs (nuclear localization signal) span residues Lys207–Lys209 and Lys221–Lys226. In terms of domain architecture, PADR1 zinc-binding spans Arg225–Pro359. Lys249 is covalently cross-linked (Glycyl lysine isopeptide (Lys-Gly) (interchain with G-Cter in SUMO2)). Residues Ser274 and Ser277 each carry the phosphoserine modification. The interval Gly290–Glu332 is zinc ribbon. Zn(2+) contacts are provided by Cys295, Cys298, Cys311, and Cys321. Positions Val373–Lys523 are automodification domain. Residues Pro385–His476 form the BRCT domain. A PolyADP-ribosyl aspartic acid modification is found at Asp387. Residues Glu407, Glu413, Glu435, Glu437, Glu444, Glu445, Glu448, and Glu456 each carry the polyADP-ribosyl glutamic acid modification. Lys467 participates in a covalent cross-link: Glycyl lysine isopeptide (Lys-Gly) (interchain with G-Cter in SUMO2). The residue at position 484 (Glu484) is a PolyADP-ribosyl glutamic acid. Lys486 participates in a covalent cross-link: Glycyl lysine isopeptide (Lys-Gly) (interchain with G-Cter in SUMO1); alternate. A Glycyl lysine isopeptide (Lys-Gly) (interchain with G-Cter in SUMO2); alternate cross-link involves residue Lys486. PolyADP-ribosyl glutamic acid is present on residues Glu488 and Glu491. The tract at residues Pro489–Gly508 is disordered. Residues Ala494–Ser503 are compositionally biased toward low complexity. Residues Ser499, Ser503, and Ser506 each carry the ADP-ribosylserine modification. Lys511 is covalently cross-linked (Glycyl lysine isopeptide (Lys-Gly) (interchain with G-Cter in SUMO2)). Glu512 and Glu513 each carry polyADP-ribosyl glutamic acid. Ser518 carries the ADP-ribosylserine modification. Position 519 is a polyADP-ribosyl glutamic acid (Glu519). Lys520 is modified (N6-(ADP-ribosyl)lysine). Lys527 participates in a covalent cross-link: Glycyl lysine isopeptide (Lys-Gly) (interchain with G-Cter in SUMO2). The 97-residue stretch at Ser541–Phe637 folds into the WGR domain. Thr593 is subject to Phosphothreonine. N6-acetyllysine occurs at positions 599 and 620. The PARP alpha-helical domain occupies Lys661–Arg778. Lys747 is covalently cross-linked (Glycyl lysine isopeptide (Lys-Gly) (interchain with G-Cter in SUMO1); alternate). Residue Lys747 forms a Glycyl lysine isopeptide (Lys-Gly) (interchain with G-Cter in SUMO2); alternate linkage. A phosphoserine mark is found at Ser781 and Ser785. In terms of domain architecture, PARP catalytic spans Asp787 to Trp1013. NAD(+)-binding positions include His861–Ser863, Gly870, Arg877, and Ser903. Glu987 functions as the For poly [ADP-ribose] polymerase activity in the catalytic mechanism.

Belongs to the ARTD/PARP family. As to quaternary structure, homodimer; PARP-type zinc-fingers from separate PARP1 molecules form a dimer module that specifically recognizes DNA strand breaks. Heterodimer; heterodimerizes with PARP2. Interacts (via the PARP catalytic domain) with HPF1. Interacts with NMNAT1. Interacts with nucleosomes; with a preference for nucleosomes containing H2A.X. Interacts with APTX. Component of a base excision repair (BER) complex, containing at least XRCC1, PARP1, PARP2, POLB and LRIG3. Interacts with SRY. The SWAP complex consists of NPM1, NCL, PARP1 and SWAP70. Interacts with TIAM2. Interacts with PARP3; leading to activate PARP1 in absence of DNA. Interacts (when poly-ADP-ribosylated) with CHD1L (via macro domain). Interacts with the DNA polymerase alpha catalytic subunit POLA1; this interaction functions as part of the control of replication fork progression. Interacts with EEF1A1 and TXK. Interacts with RNF4. Interacts with RNF146. Interacts with ZNF423. Interacts with APLF. Interacts with SNAI1 (via zinc fingers); the interaction requires SNAI1 to be poly-ADP-ribosylated and non-phosphorylated (active) by GSK3B. Interacts (when poly-ADP-ribosylated) with PARP9. Interacts with NR4A3; activates PARP1 by improving acetylation of PARP1 and suppressing the interaction between PARP1 and SIRT1. Interacts (via catalytic domain) with PUM3; the interaction inhibits the poly-ADP-ribosylation activity of PARP1 and the degradation of PARP1 by CASP3 following genotoxic stress. Interacts with ZNF365. Interacts with RRP1B. Interacts with TIMELESS; the interaction is direct. Interacts with CGAS; leading to impede the formation of the PARP1-TIMELESS complex. Interacts with KHDC3L, the interaction is increased following the formation of DNA double-strand breaks. Interacts (when auto-poly-ADP-ribosylated) with XRCC1; leading to inhibit PARP1 ADP-ribosyltransferase activity. Interacts with SPINDOC; promoting PARP1 ADP-ribosyltransferase activity. Interacts with BANF1; leading to inhibit PARP1 ADP-ribosyltransferase activity in response to oxidative DNA damage. Interacts (when sumoylated and ubiquitinated) with VCP/p97; leading to its extraction from chromatin. Interacts with YARS1; promoting PARP1 ADP-ribosyltransferase activity. Interacts with PACMP micropeptide; Interacts with PACMP micropeptide; interaction. Interacts (when poly-ADP-ribosylated) with isoform 1 of MACROH2A1; MACROH2A1 specifically binds to poly-ADP-ribose chains and inhibits PARP1 activity, limiting the consumption of nuclear NAD(+). Interacts with CARM1; promoting recruitment to replication forks. Interacts with RECQL. Interacts with ZNF32; the interaction reshapes ZNF432 interacting proteins. Interacts with TPRN; TPRN interacts with a number of DNA damage response proteins, is recruited to sites of DNA damage and may play a role in DNA damage repair. Interacts (when auto-poly-ADP-ribosylated) with AIFM1. Post-translationally, poly-ADP-ribosylated on serine, glutamate and aspartate residues by autocatalysis. Auto-ADP-ribosylation on serine takes place following interaction with HPF1. Auto poly-ADP-ribosylation on serine residues promotes its dissociation from chromatin. Poly-ADP-ribosylated by PARP2; poly-ADP-ribosylation mediates the recruitment of CHD1L to DNA damage sites. Mono-ADP-ribosylated at Lys-520 by SIRT6 in response to oxidative stress, promoting recruitment to double-strand breaks (DSBs) sites. In terms of processing, S-nitrosylated, leading to inhibit transcription regulation activity. Phosphorylated at Thr-593 by PRKDC in response to DNA damage following virus infection, promoting its translocation to the cytosol. Phosphorylated by TXK. Post-translationally, proteolytically cleaved by caspase-3 (CASP3) and caspase-7 (CASP7) in response to apoptosis to generate the Poly [ADP-ribose] polymerase 1, processed N-terminus and Poly [ADP-ribose] polymerase 1, processed C-terminus forms. In terms of processing, sumoylated with SUMO1 or SUMO2 by PIAS4 following prolonged residence (trapping) to chromatin. Sumoylation promotes ubiquitination by RNF4 and removal from chromatin by VCP/p97. Ubiquitinated by RNF4 following sumoylation by PIAS4 in response to prolonged residence (trapping) to chromatin. Ubiquitination promotes removal from chromatin by VCP/p97. In terms of tissue distribution, widely expressed. Expression is correlated with proliferation, with higher levels occurring during early fetal development and organogenesis and in the highly proliferative cell compartments of adult. Expressed in B-cells that have been induced to switch to various Ig isotypes.

Its subcellular location is the chromosome. The protein resides in the nucleus. It localises to the nucleolus. The protein localises to the cytoplasm. It is found in the cytosol. It carries out the reaction NAD(+) + (ADP-D-ribosyl)n-acceptor = nicotinamide + (ADP-D-ribosyl)n+1-acceptor + H(+).. The enzyme catalyses L-seryl-[protein] + NAD(+) = O-(ADP-D-ribosyl)-L-seryl-[protein] + nicotinamide + H(+). It catalyses the reaction L-aspartyl-[protein] + NAD(+) = 4-O-(ADP-D-ribosyl)-L-aspartyl-[protein] + nicotinamide. The catalysed reaction is L-glutamyl-[protein] + NAD(+) = 5-O-(ADP-D-ribosyl)-L-glutamyl-[protein] + nicotinamide. It carries out the reaction L-tyrosyl-[protein] + NAD(+) = O-(ADP-D-ribosyl)-L-tyrosyl-[protein] + nicotinamide + H(+). The enzyme catalyses L-histidyl-[protein] + NAD(+) = N(tele)-(ADP-D-ribosyl)-L-histidyl-[protein] + nicotinamide + H(+). Its activity is regulated as follows. ADP-ribosyltransferase activity is regulated via an allosteric activation mechanism. In absence of activation signal, PARP1 is autoinhibited by the PARP alpha-helical domain (also named HD region), which prevents effective NAD(+)-binding. Activity is highly stimulated by signals, such as DNA strand breaks. Binding to damaged DNA unfolds the PARP alpha-helical domain, relieving autoinhibition. Poly-ADP-ribosyltransferase activity is tightly regulated and PARP1 is removed from damaged chromatin following initial poly-ADP-ribosylation of chromatin to avoid prolonged residence (trapping) that has cytotoxic consequences. A number of factors (VCP/p97) or post-translational modifications (auto-poly-ADP-ribosylation or ubiquitination) promote PARP1 removal from chromatin. Its function is as follows. Poly-ADP-ribosyltransferase that mediates poly-ADP-ribosylation of proteins and plays a key role in DNA repair. Mediates glutamate, aspartate, serine, histidine or tyrosine ADP-ribosylation of proteins: the ADP-D-ribosyl group of NAD(+) is transferred to the acceptor carboxyl group of target residues and further ADP-ribosyl groups are transferred to the 2'-position of the terminal adenosine moiety, building up a polymer with an average chain length of 20-30 units. Serine ADP-ribosylation of proteins constitutes the primary form of ADP-ribosylation of proteins in response to DNA damage. Specificity for the different amino acids is conferred by interacting factors, such as HPF1 and NMNAT1. Following interaction with HPF1, catalyzes serine ADP-ribosylation of target proteins; HPF1 confers serine specificity by completing the PARP1 active site. Also catalyzes tyrosine ADP-ribosylation of target proteins following interaction with HPF1. Following interaction with NMNAT1, catalyzes glutamate and aspartate ADP-ribosylation of target proteins; NMNAT1 confers glutamate and aspartate specificity. PARP1 initiates the repair of DNA breaks: recognizes and binds DNA breaks within chromatin and recruits HPF1, licensing serine ADP-ribosylation of target proteins, such as histones (H2BS6ADPr and H3S10ADPr), thereby promoting decompaction of chromatin and the recruitment of repair factors leading to the reparation of DNA strand breaks. HPF1 initiates serine ADP-ribosylation but restricts the polymerase activity of PARP1 in order to limit the length of poly-ADP-ribose chains. In addition to base excision repair (BER) pathway, also involved in double-strand breaks (DSBs) repair: together with TIMELESS, accumulates at DNA damage sites and promotes homologous recombination repair by mediating poly-ADP-ribosylation. Mediates the poly-ADP-ribosylation of a number of proteins, including itself, APLF, CHFR and NFAT5. In addition to proteins, also able to ADP-ribosylate DNA: catalyzes ADP-ribosylation of DNA strand break termini containing terminal phosphates and a 2'-OH group in single- and double-stranded DNA, respectively. Required for PARP9 and DTX3L recruitment to DNA damage sites. PARP1-dependent PARP9-DTX3L-mediated ubiquitination promotes the rapid and specific recruitment of 53BP1/TP53BP1, UIMC1/RAP80, and BRCA1 to DNA damage sites. PARP1-mediated DNA repair in neurons plays a role in sleep: senses DNA damage in neurons and promotes sleep, facilitating efficient DNA repair. In addition to DNA repair, also involved in other processes, such as transcription regulation, programmed cell death, membrane repair, adipogenesis and innate immunity. Acts as a repressor of transcription: binds to nucleosomes and modulates chromatin structure in a manner similar to histone H1, thereby altering RNA polymerase II. Acts both as a positive and negative regulator of transcription elongation, depending on the context. Acts as a positive regulator of transcription elongation by mediating poly-ADP-ribosylation of NELFE, preventing RNA-binding activity of NELFE and relieving transcription pausing. Acts as a negative regulator of transcription elongation in response to DNA damage by catalyzing poly-ADP-ribosylation of CCNT1, disrupting the phase separation activity of CCNT1 and subsequent activation of CDK9. Involved in replication fork progression following interaction with CARM1: mediates poly-ADP-ribosylation at replication forks, slowing fork progression. Poly-ADP-ribose chains generated by PARP1 also play a role in poly-ADP-ribose-dependent cell death, a process named parthanatos. Also acts as a negative regulator of the cGAS-STING pathway. Acts by mediating poly-ADP-ribosylation of CGAS: PARP1 translocates into the cytosol following phosphorylation by PRKDC and catalyzes poly-ADP-ribosylation and inactivation of CGAS. Acts as a negative regulator of adipogenesis: catalyzes poly-ADP-ribosylation of histone H2B on 'Glu-35' (H2BE35ADPr) following interaction with NMNAT1, inhibiting phosphorylation of H2B at 'Ser-36' (H2BS36ph), thereby blocking expression of pro-adipogenetic genes. Involved in the synthesis of ATP in the nucleus, together with NMNAT1, PARG and NUDT5. Nuclear ATP generation is required for extensive chromatin remodeling events that are energy-consuming. Promotes AIFM1-mediated apoptosis. This form, which translocates into the cytoplasm following cleavage by caspase-3 (CASP3) and caspase-7 (CASP7) in response to apoptosis, is auto-poly-ADP-ribosylated and serves as a poly-ADP-ribose carrier to induce AIFM1-mediated apoptosis. In terms of biological role, this cleavage form irreversibly binds to DNA breaks and interferes with DNA repair, promoting DNA damage-induced apoptosis. The sequence is that of Poly [ADP-ribose] polymerase 1 (Parp1) from Mus musculus (Mouse).